Consider the following 652-residue polypeptide: Set1 complex component ash2 (652 aa).

Residues methionine 1 to glutamate 32 form a disordered region. The span at glycine 15 to glutamate 32 shows a compositional bias: polar residues. The PHD-type zinc-finger motif lies at asparagine 40–aspartate 94. Zn(2+) contacts are provided by cysteine 43, cysteine 45, cysteine 58, cysteine 61, histidine 66, cysteine 69, cysteine 88, and cysteine 91. The tract at residues arginine 234–serine 270 is disordered. The segment covering lysine 247–arginine 261 has biased composition (basic and acidic residues). The 190-residue stretch at glutamate 330–tyrosine 519 folds into the B30.2/SPRY domain.

Belongs to the cclA family. As to quaternary structure, component of the Set1 complex composed of ash2, sdc1, set1, shg1, spp1, swd1, swd2 and swd3. Component of the Lid2 complex composed of ash2, jmj3, lid2, sdc1 and snt2.

It is found in the nucleus. Functionally, component of the COMPASS (Set1C) complex that specifically mono-, di- and trimethylates histone H3 to form H3K4me1/2/3, which subsequently plays a role in telomere length maintenance and transcription elongation regulation. Regulates MAPK pathway and sporulation through H3K4 methylation. The polypeptide is Set1 complex component ash2 (Schizosaccharomyces pombe (strain 972 / ATCC 24843) (Fission yeast)).